A 143-amino-acid polypeptide reads, in one-letter code: Large ribosomal subunit protein uL13 (143 aa).

The protein belongs to the universal ribosomal protein uL13 family. As to quaternary structure, part of the 50S ribosomal subunit.

Its function is as follows. This protein is one of the early assembly proteins of the 50S ribosomal subunit, although it is not seen to bind rRNA by itself. It is important during the early stages of 50S assembly. In Natranaerobius thermophilus (strain ATCC BAA-1301 / DSM 18059 / JW/NM-WN-LF), this protein is Large ribosomal subunit protein uL13.